The sequence spans 574 residues: Glucose-6-phosphate 1-dehydrogenase, chloroplastic (574 aa).

NADP(+) is bound by residues 93–100 and Arg127; that span reads GASGDLAK. A disulfide bond links Cys145 and Cys153. Lys230 contacts NADP(+). Residues Lys230, 260-264, Glu298, and Asp317 each bind D-glucose 6-phosphate; that span reads HYLGK. The Proton acceptor role is filled by His322. Lys415 lines the NADP(+) pocket. The D-glucose 6-phosphate site is built by Lys418 and Lys423. NADP(+) contacts are provided by Arg424, Arg428, and Arg457. Residue Gln459 coordinates D-glucose 6-phosphate. NADP(+) is bound by residues 465–467 and Arg550; that span reads YLK.

Belongs to the glucose-6-phosphate dehydrogenase family. Homodimer.

The protein resides in the plastid. Its subcellular location is the chloroplast. The enzyme catalyses D-glucose 6-phosphate + NADP(+) = 6-phospho-D-glucono-1,5-lactone + NADPH + H(+). It functions in the pathway carbohydrate degradation; pentose phosphate pathway; D-ribulose 5-phosphate from D-glucose 6-phosphate (oxidative stage): step 1/3. With respect to regulation, regulated by metabolites. Post-translationally inactivated by cysteine-mediated redox modification via the ferredoxin-thioredoxin system in the light and this avoids futile cycles with photosynthetic CO2 fixation. Its function is as follows. Catalyzes the rate-limiting step of the oxidative pentose-phosphate pathway, which represents a route for the dissimilation of carbohydrates besides glycolysis. The main function of this enzyme is to provide reducing power (NADPH) and pentose phosphates for fatty acid and nucleic acid synthesis which are involved in membrane synthesis and cell division. In Spinacia oleracea (Spinach), this protein is Glucose-6-phosphate 1-dehydrogenase, chloroplastic (G6PD).